The following is a 152-amino-acid chain: Endoribonuclease YbeY (152 aa).

Positions 101, 105, and 111 each coordinate Zn(2+). A disordered region spans residues 132–152; sequence PSSLIERTTKPAKKAAKRKKR. Basic residues predominate over residues 141–152; the sequence is KPAKKAAKRKKR.

It belongs to the endoribonuclease YbeY family. The cofactor is Zn(2+).

Its subcellular location is the cytoplasm. In terms of biological role, single strand-specific metallo-endoribonuclease involved in late-stage 70S ribosome quality control and in maturation of the 3' terminus of the 16S rRNA. In Koribacter versatilis (strain Ellin345), this protein is Endoribonuclease YbeY.